The sequence spans 253 residues: Dihydroanticapsin 7-dehydrogenase (253 aa).

9–31 (LITGGASGIGYAAVQAFLNQQAN) provides a ligand contact to NAD(+). A substrate-binding site is contributed by serine 139. The active-site Proton acceptor is tyrosine 152.

This sequence belongs to the short-chain dehydrogenases/reductases (SDR) family.

The enzyme catalyses L-dihydroanticapsin + NAD(+) = L-anticapsin + NADH + H(+). It participates in antibiotic biosynthesis; bacilysin biosynthesis. Part of the bacABCDEFG operon responsible for the biosynthesis of bacilysin, an irreversible inactivator of the glutaminase domain of glucosamine synthetase. Catalyzes the dehydrogenation of the C7-hydroxyl group in the 4S-tetrahydrotyrosine (4S-H4Tyr) to yield anticapsin (epoxycyclohexanonyl-Ala). The polypeptide is Dihydroanticapsin 7-dehydrogenase (Bacillus subtilis).